Reading from the N-terminus, the 136-residue chain is Large ribosomal subunit protein uL16 (136 aa).

Belongs to the universal ribosomal protein uL16 family. As to quaternary structure, part of the 50S ribosomal subunit.

Its function is as follows. Binds 23S rRNA and is also seen to make contacts with the A and possibly P site tRNAs. The protein is Large ribosomal subunit protein uL16 of Photobacterium profundum (strain SS9).